The following is a 1047-amino-acid chain: Atrial natriuretic peptide receptor 2 (1047 aa).

The signal sequence occupies residues methionine 1–alanine 22. Topologically, residues arginine 23–isoleucine 458 are extracellular. Residues asparagine 24 and asparagine 35 are each glycosylated (N-linked (GlcNAc...) asparagine). Cysteine 75 and cysteine 101 are disulfide-bonded. Residues asparagine 161, asparagine 195, asparagine 244, asparagine 277, and asparagine 349 are each glycosylated (N-linked (GlcNAc...) asparagine). The helical transmembrane segment at valine 459–phenylalanine 478 threads the bilayer. The Cytoplasmic segment spans residues arginine 479–leucine 1047. Serine 513 carries the post-translational modification Phosphoserine. One can recognise a Protein kinase domain in the interval serine 513 to isoleucine 786. The residue at position 516 (threonine 516) is a Phosphothreonine. 4 positions are modified to phosphoserine: serine 518, serine 522, serine 523, and serine 526. Threonine 529 carries the post-translational modification Phosphothreonine. The Guanylate cyclase domain occupies threonine 861–glutamate 991.

It belongs to the adenylyl cyclase class-4/guanylyl cyclase family. Phosphorylated. Phosphorylation of the protein kinase-like domain is required for full activation by CNP. In terms of processing, glycosylated.

Its subcellular location is the cell membrane. It catalyses the reaction GTP = 3',5'-cyclic GMP + diphosphate. Receptor for the C-type natriuretic peptide NPPC/CNP hormone. Has guanylate cyclase activity upon binding of its ligand. May play a role in the regulation of skeletal growth. The polypeptide is Atrial natriuretic peptide receptor 2 (NPR2) (Homo sapiens (Human)).